We begin with the raw amino-acid sequence, 348 residues long: Isopentenyl-diphosphate delta-isomerase (348 aa).

Residue 9-10 (RK) participates in substrate binding. FMN is bound by residues 68–70 (AMT), S98, and N127. Q157 lines the substrate pocket. E158 is a Mg(2+) binding site. FMN contacts are provided by residues K188, S213, T218, and 286 to 287 (AG).

The protein belongs to the IPP isomerase type 2 family. Homooctamer. Dimer of tetramers. FMN serves as cofactor. The cofactor is NADPH. It depends on Mg(2+) as a cofactor.

The protein resides in the cytoplasm. It carries out the reaction isopentenyl diphosphate = dimethylallyl diphosphate. Functionally, involved in the biosynthesis of isoprenoids. Catalyzes the 1,3-allylic rearrangement of the homoallylic substrate isopentenyl (IPP) to its allylic isomer, dimethylallyl diphosphate (DMAPP). The polypeptide is Isopentenyl-diphosphate delta-isomerase (Limosilactobacillus reuteri subsp. reuteri (strain JCM 1112) (Lactobacillus reuteri)).